An 807-amino-acid polypeptide reads, in one-letter code: Leucine--tRNA ligase (807 aa).

Positions 40–51 (PYPSGSGLHVGH) match the 'HIGH' region motif. Positions 576–580 (KMSKS) match the 'KMSKS' region motif. Lysine 579 provides a ligand contact to ATP.

The protein belongs to the class-I aminoacyl-tRNA synthetase family.

The protein resides in the cytoplasm. The enzyme catalyses tRNA(Leu) + L-leucine + ATP = L-leucyl-tRNA(Leu) + AMP + diphosphate. In Chlorobaculum tepidum (strain ATCC 49652 / DSM 12025 / NBRC 103806 / TLS) (Chlorobium tepidum), this protein is Leucine--tRNA ligase.